We begin with the raw amino-acid sequence, 338 residues long: Methionine import ATP-binding protein MetN 1 (338 aa).

Residues 2-241 (IEVRSVTKRF…PHSELGVGLL (240 aa)) form the ABC transporter domain. An ATP-binding site is contributed by 38–45 (GQSGAGKT).

It belongs to the ABC transporter superfamily. Methionine importer (TC 3.A.1.24) family. The complex is composed of two ATP-binding proteins (MetN), two transmembrane proteins (MetI) and a solute-binding protein (MetQ).

It localises to the cell membrane. It carries out the reaction L-methionine(out) + ATP + H2O = L-methionine(in) + ADP + phosphate + H(+). The catalysed reaction is D-methionine(out) + ATP + H2O = D-methionine(in) + ADP + phosphate + H(+). Part of the ABC transporter complex MetNIQ involved in methionine import. Responsible for energy coupling to the transport system. This is Methionine import ATP-binding protein MetN 1 from Rhodococcus jostii (strain RHA1).